The primary structure comprises 380 residues: 5-amino-6-(D-ribitylamino)uracil--L-tyrosine 4-hydroxyphenyl transferase (380 aa).

Positions 56–303 constitute a Radical SAM core domain; sequence VTYIINRNIN…GAVARIYLGN (248 aa). Positions 70, 74, and 77 each coordinate [4Fe-4S] cluster.

Belongs to the radical SAM superfamily. CofH family. As to quaternary structure, consists of two subunits, CofG and CofH. [4Fe-4S] cluster serves as cofactor.

It catalyses the reaction 5-amino-6-(D-ribitylamino)uracil + L-tyrosine + S-adenosyl-L-methionine = 5-amino-5-(4-hydroxybenzyl)-6-(D-ribitylimino)-5,6-dihydrouracil + 2-iminoacetate + 5'-deoxyadenosine + L-methionine + H(+). The protein operates within cofactor biosynthesis; coenzyme F0 biosynthesis. In terms of biological role, catalyzes the radical-mediated synthesis of 5-amino-5-(4-hydroxybenzyl)-6-(D-ribitylimino)-5,6-dihydrouracil from 5-amino-6-(D-ribitylamino)uracil and L-tyrosine. This chain is 5-amino-6-(D-ribitylamino)uracil--L-tyrosine 4-hydroxyphenyl transferase, found in Nostoc punctiforme (strain ATCC 29133 / PCC 73102).